The sequence spans 162 residues: Peptidyl-prolyl cis-trans isomerase-like 1 (162 aa).

The 155-residue stretch at 1-155 folds into the PPIase cyclophilin-type domain; the sequence is MATDVAFDTS…DGVKILRARI (155 aa).

The protein belongs to the cyclophilin-type PPIase family. PPIL1 subfamily.

The catalysed reaction is [protein]-peptidylproline (omega=180) = [protein]-peptidylproline (omega=0). In terms of biological role, PPIases accelerate the folding of proteins. It catalyzes the cis-trans isomerization of proline imidic peptide bonds in oligopeptides. The polypeptide is Peptidyl-prolyl cis-trans isomerase-like 1 (cypC) (Aspergillus niger).